The primary structure comprises 209 residues: Protease (209 aa).

Residues His-55, Asp-72, and Cys-123 contribute to the active site.

The protein belongs to the peptidase C5 family. In terms of assembly, interacts with protease cofactor pVI-C; this interaction is necessary for protease activation.

It is found in the virion. It localises to the host nucleus. The enzyme catalyses Cleaves proteins of the adenovirus and its host cell at two consensus sites: -Yaa-Xaa-Gly-Gly-|-Xaa- and -Yaa-Xaa-Gly-Xaa-|-Gly- (in which Yaa is Met, Ile or Leu, and Xaa is any amino acid).. With respect to regulation, requires DNA and protease cofactor for maximal activation. Inside nascent virions, becomes partially activated by binding to the viral DNA, allowing it to cleave the cofactor that binds to the protease and fully activates it. Actin, like the viral protease cofactor, seems to act as a cofactor in the cleavage of cytokeratin 18 and of actin itself. Cleaves viral precursor proteins (pTP, pIIIa, pVI, pVII, pVIII, and pX) inside newly assembled particles giving rise to mature virions. Protease complexed to its cofactor slides along the viral DNA to specifically locate and cleave the viral precursors. Mature virions have a weakened organization compared to the unmature virions, thereby facilitating subsequent uncoating. Without maturation, the particle lacks infectivity and is unable to uncoat. Late in adenovirus infection, in the cytoplasm, may participate in the cytoskeleton destruction. Cleaves host cell cytoskeletal keratins K7 and K18. This is Protease from Human adenovirus D serotype 9 (HAdV-9).